The sequence spans 288 residues: Diaminopimelate epimerase (288 aa).

Substrate contacts are provided by Asn14 and Asn67. The Proton donor role is filled by Cys76. Substrate contacts are provided by residues 77–78 (GN), Asn166, Asn199, and 217–218 (ER). Catalysis depends on Cys226, which acts as the Proton acceptor. 227-228 (GT) is a binding site for substrate.

It belongs to the diaminopimelate epimerase family. Homodimer.

The protein resides in the cytoplasm. It catalyses the reaction (2S,6S)-2,6-diaminopimelate = meso-2,6-diaminopimelate. It functions in the pathway amino-acid biosynthesis; L-lysine biosynthesis via DAP pathway; DL-2,6-diaminopimelate from LL-2,6-diaminopimelate: step 1/1. Its function is as follows. Catalyzes the stereoinversion of LL-2,6-diaminopimelate (L,L-DAP) to meso-diaminopimelate (meso-DAP), a precursor of L-lysine and an essential component of the bacterial peptidoglycan. This Bacillus cereus (strain ATCC 10987 / NRS 248) protein is Diaminopimelate epimerase.